Consider the following 285-residue polypeptide: Bifunctional protein FolD (285 aa).

Residues 165–167 (GRS), Ser-190, and Ile-231 each bind NADP(+).

The protein belongs to the tetrahydrofolate dehydrogenase/cyclohydrolase family. As to quaternary structure, homodimer.

The catalysed reaction is (6R)-5,10-methylene-5,6,7,8-tetrahydrofolate + NADP(+) = (6R)-5,10-methenyltetrahydrofolate + NADPH. The enzyme catalyses (6R)-5,10-methenyltetrahydrofolate + H2O = (6R)-10-formyltetrahydrofolate + H(+). Its pathway is one-carbon metabolism; tetrahydrofolate interconversion. Its function is as follows. Catalyzes the oxidation of 5,10-methylenetetrahydrofolate to 5,10-methenyltetrahydrofolate and then the hydrolysis of 5,10-methenyltetrahydrofolate to 10-formyltetrahydrofolate. In Acetivibrio thermocellus (strain ATCC 27405 / DSM 1237 / JCM 9322 / NBRC 103400 / NCIMB 10682 / NRRL B-4536 / VPI 7372) (Clostridium thermocellum), this protein is Bifunctional protein FolD.